We begin with the raw amino-acid sequence, 328 residues long: Alanine racemase (328 aa).

Lys-33 functions as the Proton acceptor; specific for D-alanine in the catalytic mechanism. Lys-33 bears the N6-(pyridoxal phosphate)lysine mark. Arg-118 serves as a coordination point for substrate. Catalysis depends on Tyr-237, which acts as the Proton acceptor; specific for L-alanine. A substrate-binding site is contributed by Met-283.

Belongs to the alanine racemase family. The cofactor is pyridoxal 5'-phosphate.

It carries out the reaction L-alanine = D-alanine. It participates in amino-acid biosynthesis; D-alanine biosynthesis; D-alanine from L-alanine: step 1/1. Functionally, catalyzes the interconversion of L-alanine and D-alanine. May also act on other amino acids. The protein is Alanine racemase (alr) of Campylobacter jejuni subsp. doylei (strain ATCC BAA-1458 / RM4099 / 269.97).